The following is a 698-amino-acid chain: UvrABC system protein B (698 aa).

The 387-residue stretch at 28 to 414 (RRILAGERDV…SGGEFVEQVI (387 aa)) folds into the Helicase ATP-binding domain. 41 to 48 (GATGTGKS) provides a ligand contact to ATP. A Beta-hairpin motif is present at residues 94-117 (YYDYYQPEAYIAQTDTYIEKDSSI). Residues 432–598 (QIDDLIGEIR…PLRKKIADIL (167 aa)) enclose the Helicase C-terminal domain. Residues 609–629 (DTVQVGGSGRNVSRGRRAQSE) are disordered. In terms of domain architecture, UVR spans 653 to 688 (ADLIKDLTAQMMAAASDLQFELAARFRDEIADLKKE).

This sequence belongs to the UvrB family. Forms a heterotetramer with UvrA during the search for lesions. Interacts with UvrC in an incision complex.

The protein resides in the cytoplasm. Functionally, the UvrABC repair system catalyzes the recognition and processing of DNA lesions. A damage recognition complex composed of 2 UvrA and 2 UvrB subunits scans DNA for abnormalities. Upon binding of the UvrA(2)B(2) complex to a putative damaged site, the DNA wraps around one UvrB monomer. DNA wrap is dependent on ATP binding by UvrB and probably causes local melting of the DNA helix, facilitating insertion of UvrB beta-hairpin between the DNA strands. Then UvrB probes one DNA strand for the presence of a lesion. If a lesion is found the UvrA subunits dissociate and the UvrB-DNA preincision complex is formed. This complex is subsequently bound by UvrC and the second UvrB is released. If no lesion is found, the DNA wraps around the other UvrB subunit that will check the other stand for damage. In Mycobacterium leprae (strain TN), this protein is UvrABC system protein B.